The sequence spans 223 residues: Endonuclease V (223 aa).

Mg(2+) is bound by residues Asp35 and Asp103.

Belongs to the endonuclease V family. Mg(2+) serves as cofactor.

It is found in the cytoplasm. It carries out the reaction Endonucleolytic cleavage at apurinic or apyrimidinic sites to products with a 5'-phosphate.. Functionally, DNA repair enzyme involved in the repair of deaminated bases. Selectively cleaves double-stranded DNA at the second phosphodiester bond 3' to a deoxyinosine leaving behind the intact lesion on the nicked DNA. The protein is Endonuclease V of Salmonella agona (strain SL483).